Reading from the N-terminus, the 84-residue chain is Cell division topological specificity factor (84 aa).

It belongs to the MinE family.

In terms of biological role, prevents the cell division inhibition by proteins MinC and MinD at internal division sites while permitting inhibition at polar sites. This ensures cell division at the proper site by restricting the formation of a division septum at the midpoint of the long axis of the cell. In Burkholderia cenocepacia (strain HI2424), this protein is Cell division topological specificity factor.